Consider the following 156-residue polypeptide: Class I hydrophobin B (156 aa).

The N-terminal stretch at 1-18 (MQFTLSAVVLALAGFSAA) is a signal peptide. Disulfide bonds link Cys52/Cys130, Cys60/Cys124, Cys61/Cys101, and Cys131/Cys149.

The protein belongs to the fungal hydrophobin family.

It is found in the secreted. The protein localises to the cell wall. Aerial growth, conidiation, and dispersal of filamentous fungi in the environment rely upon a capability of their secreting small amphipathic proteins called hydrophobins (HPBs) with low sequence identity. Class I can self-assemble into an outermost layer of rodlet bundles on aerial cell surfaces, conferring cellular hydrophobicity that supports fungal growth, development and dispersal; whereas Class II form highly ordered films at water-air interfaces through intermolecular interactions but contribute nothing to the rodlet structure. In P.expansum, hydrophobins contribute to germination, tolerance to cold stress and mycotoxins patulin and citrinin production. HfbA and HfbB are essential for fungal surface hydrophobicity. The chain is Class I hydrophobin B from Penicillium expansum (Blue mold rot fungus).